The sequence spans 249 residues: Large ribosomal subunit protein uL4 (249 aa).

Belongs to the universal ribosomal protein uL4 family. Part of the 50S ribosomal subunit.

One of the primary rRNA binding proteins, this protein initially binds near the 5'-end of the 23S rRNA. It is important during the early stages of 50S assembly. It makes multiple contacts with different domains of the 23S rRNA in the assembled 50S subunit and ribosome. In terms of biological role, forms part of the polypeptide exit tunnel. The protein is Large ribosomal subunit protein uL4 of Methanospirillum hungatei JF-1 (strain ATCC 27890 / DSM 864 / NBRC 100397 / JF-1).